Reading from the N-terminus, the 75-residue chain is Exodeoxyribonuclease 7 small subunit (75 aa).

The protein belongs to the XseB family. Heterooligomer composed of large and small subunits.

It localises to the cytoplasm. It catalyses the reaction Exonucleolytic cleavage in either 5'- to 3'- or 3'- to 5'-direction to yield nucleoside 5'-phosphates.. In terms of biological role, bidirectionally degrades single-stranded DNA into large acid-insoluble oligonucleotides, which are then degraded further into small acid-soluble oligonucleotides. The protein is Exodeoxyribonuclease 7 small subunit of Geobacter sp. (strain M21).